Here is a 207-residue protein sequence, read N- to C-terminus: Ras-related protein Rab-7a (207 aa).

Thr-2 is modified (N-acetylthreonine). GTP contacts are provided by Ser-17, Gly-18, Val-19, Gly-20, Lys-21, Thr-22, Ser-23, Ser-34, Asn-35, Tyr-37, and Thr-40. Thr-22 provides a ligand contact to Mg(2+). Residues 28–41 (YVNKKFSNQYKATI) carry the Switch 1 motif. Thr-40 and Asp-63 together coordinate Mg(2+). Gly-66 contacts GTP. The short motif at 67 to 82 (QERFQSLGVAFYRGAD) is the Switch 2 element. A Phosphoserine modification is found at Ser-72. GTP-binding residues include Asn-125, Lys-126, Asp-128, Ala-156, and Lys-157. Glycyl lysine isopeptide (Lys-Gly) (interchain with G-Cter in ubiquitin) cross-links involve residues Lys-191 and Lys-194. S-geranylgeranyl cysteine attachment occurs at residues Cys-205 and Cys-207. Cys-207 carries the cysteine methyl ester modification.

Belongs to the small GTPase superfamily. Rab family. Interacts with NTRK1/TRKA, RILP, PSMA7, RNF115 and FYCO1. Interacts with the PIK3C3/VPS34-PIK3R4 complex. The GTP-bound form interacts with OSBPL1A and RAC1. Interacts with CLN3. Interacts with CHM, the substrate-binding subunit of the Rab geranylgeranyltransferase complex. Interacts with C9orf72. Does not interact with HPS4 and the BLOC-3 complex (heterodimer of HPS1 and HPS4). Interacts with CLN5. Interacts with PLEKHM1 (via N- and C-terminus). Interacts with PRPH; the interaction is direct. Interacts with VPS13A. The GDP-bound form interacts with RIMOC1. Interacts with the MON1A-CCZ1B complex and this interaction is enhanced in the presence of RIMOC1. Interacts with VPS39 and VPS41. Forms a ternary complex with LAMP2 and RUFY4; the interaction with LAMP2 is mediated by RUFY4 (via RUN and coiled coil domains). The cofactor is Mg(2+). In terms of processing, deubiquitination at Lys-191 and Lys-194 by USP32. Post-translationally, phosphorylated at Ser-72 by LRRK1; phosphorylation is dependent on protein kinase C (PKC) activation of LRRK1. Prenylated. Prenylation is required for association with cellular membranes. As to expression, widely expressed. High expression in liver, heart and kidney. Found in sensory and motor neurons.

It localises to the cytoplasmic vesicle. Its subcellular location is the phagosome membrane. It is found in the late endosome membrane. The protein resides in the lysosome membrane. The protein localises to the melanosome membrane. It localises to the autophagosome membrane. Its subcellular location is the lipid droplet. It is found in the endosome membrane. The protein resides in the mitochondrion membrane. It carries out the reaction GTP + H2O = GDP + phosphate + H(+). Its activity is regulated as follows. Regulated by guanine nucleotide exchange factors (GEFs) which promote the exchange of bound GDP for free GTP. Regulated by GTPase activating proteins (GAPs) which increase the GTP hydrolysis activity. Inhibited by GDP dissociation inhibitors (GDIs). The small GTPases Rab are key regulators of intracellular membrane trafficking, from the formation of transport vesicles to their fusion with membranes. Rabs cycle between an inactive GDP-bound form and an active GTP-bound form that is able to recruit to membranes different sets of downstream effectors directly responsible for vesicle formation, movement, tethering and fusion. In its active state, RAB7A binds to a variety of effector proteins playing a key role in the regulation of endo-lysosomal trafficking. Governs early-to-late endosomal maturation, microtubule minus-end as well as plus-end directed endosomal migration and positioning, and endosome-lysosome transport through different protein-protein interaction cascades. Also plays a central role in growth-factor-mediated cell signaling, nutrient-transporter-mediated nutrient uptake, neurotrophin transport in the axons of neurons and lipid metabolism. Also involved in regulation of some specialized endosomal membrane trafficking, such as maturation of melanosomes, pathogen-induced phagosomes (or vacuoles) and autophagosomes. Plays a role in the maturation and acidification of phagosomes that engulf pathogens, such as S.aureus and Mycobacteria. Plays a role in the fusion of phagosomes with lysosomes. In concert with RAC1, plays a role in regulating the formation of RBs (ruffled borders) in osteoclasts. Controls the endosomal trafficking and neurite outgrowth signaling of NTRK1/TRKA. Regulates the endocytic trafficking of the EGF-EGFR complex by regulating its lysosomal degradation. Involved in the ADRB2-stimulated lipolysis through lipophagy, a cytosolic lipase-independent autophagic pathway. Required for the exosomal release of SDCBP, CD63 and syndecan. Required for vesicular trafficking and cell surface expression of ACE2. May play a role in PRPH neuronal intermediate filament assembly. In Mus musculus (Mouse), this protein is Ras-related protein Rab-7a.